The following is a 212-amino-acid chain: ATP-dependent dethiobiotin synthetase BioD (212 aa).

12–17 (DCGKTF) lines the ATP pocket. T16 contacts Mg(2+). K33 is an active-site residue. Position 37 (S37) interacts with substrate. ATP contacts are provided by residues D50, 110-113 (EGAG), and 170-171 (NC). Mg(2+) is bound by residues D50 and E110.

This sequence belongs to the dethiobiotin synthetase family. In terms of assembly, homodimer. Mg(2+) serves as cofactor.

It is found in the cytoplasm. The catalysed reaction is (7R,8S)-7,8-diammoniononanoate + CO2 + ATP = (4R,5S)-dethiobiotin + ADP + phosphate + 3 H(+). It functions in the pathway cofactor biosynthesis; biotin biosynthesis; biotin from 7,8-diaminononanoate: step 1/2. Catalyzes a mechanistically unusual reaction, the ATP-dependent insertion of CO2 between the N7 and N8 nitrogen atoms of 7,8-diaminopelargonic acid (DAPA, also called 7,8-diammoniononanoate) to form a ureido ring. This chain is ATP-dependent dethiobiotin synthetase BioD, found in Legionella pneumophila (strain Paris).